A 342-amino-acid chain; its full sequence is Ribosomal RNA small subunit methyltransferase H (342 aa).

S-adenosyl-L-methionine is bound by residues 62–64 (GGH), Asp82, Phe108, Asp129, and Gln136. Residues 280–319 (RHSKGQYPEDENLPMPPKRPRYFSKPKRVGPSKAEISHNP) form a disordered region. The span at 297 to 309 (KRPRYFSKPKRVG) shows a compositional bias: basic residues.

This sequence belongs to the methyltransferase superfamily. RsmH family.

The protein resides in the cytoplasm. It carries out the reaction cytidine(1402) in 16S rRNA + S-adenosyl-L-methionine = N(4)-methylcytidine(1402) in 16S rRNA + S-adenosyl-L-homocysteine + H(+). Its function is as follows. Specifically methylates the N4 position of cytidine in position 1402 (C1402) of 16S rRNA. The polypeptide is Ribosomal RNA small subunit methyltransferase H (Psychrobacter cryohalolentis (strain ATCC BAA-1226 / DSM 17306 / VKM B-2378 / K5)).